The following is a 150-amino-acid chain: Siroheme decarboxylase NirD subunit (150 aa).

The protein belongs to the Ahb/Nir family. Probably forms a complex composed of NirD, NirL, NirG and NirH. All proteins are required for the total conversion of siroheme to didecarboxysiroheme.

It catalyses the reaction siroheme + 2 H(+) = 12,18-didecarboxysiroheme + 2 CO2. It participates in porphyrin-containing compound metabolism. Involved in heme d1 biosynthesis. Catalyzes the decarboxylation of siroheme into didecarboxysiroheme. This chain is Siroheme decarboxylase NirD subunit, found in Pseudomonas aeruginosa (strain ATCC 15692 / DSM 22644 / CIP 104116 / JCM 14847 / LMG 12228 / 1C / PRS 101 / PAO1).